The chain runs to 585 residues: ATP-dependent lipid A-core flippase (585 aa).

The next 5 membrane-spanning stretches (helical) occupy residues 24–44 (LWKV…ASAA), 65–85 (LLVP…SFCG), 143–163 (ITVV…MIYV), 165–185 (WKLT…IGYV), and 253–273 (PIIQ…ALSP). Positions 29–310 (ALAVLGNVIY…LTEVNAVIQR (282 aa)) constitute an ABC transmembrane type-1 domain. Residues 342-578 (LEFKSLGFAY…DGAYAALHKL (237 aa)) form the ABC transporter domain. Position 376 to 383 (376 to 383 (GRSGSGKS)) interacts with ATP.

Belongs to the ABC transporter superfamily. Lipid exporter (TC 3.A.1.106) family. In terms of assembly, homodimer.

The protein resides in the cell inner membrane. It catalyses the reaction ATP + H2O + lipid A-core oligosaccharideSide 1 = ADP + phosphate + lipid A-core oligosaccharideSide 2.. In terms of biological role, involved in lipopolysaccharide (LPS) biosynthesis. Translocates lipid A-core from the inner to the outer leaflet of the inner membrane. Transmembrane domains (TMD) form a pore in the inner membrane and the ATP-binding domain (NBD) is responsible for energy generation. The polypeptide is ATP-dependent lipid A-core flippase (Hahella chejuensis (strain KCTC 2396)).